A 371-amino-acid chain; its full sequence is tRNA N6-adenosine threonylcarbamoyltransferase (371 aa).

Residues His-110 and His-114 each contribute to the Fe cation site. Residues 132–136 (LVSGG), Asp-165, Gly-178, Asp-182, and Asn-289 contribute to the substrate site. Asp-317 contacts Fe cation.

It belongs to the KAE1 / TsaD family. It depends on Fe(2+) as a cofactor.

Its subcellular location is the cytoplasm. It catalyses the reaction L-threonylcarbamoyladenylate + adenosine(37) in tRNA = N(6)-L-threonylcarbamoyladenosine(37) in tRNA + AMP + H(+). Required for the formation of a threonylcarbamoyl group on adenosine at position 37 (t(6)A37) in tRNAs that read codons beginning with adenine. Is involved in the transfer of the threonylcarbamoyl moiety of threonylcarbamoyl-AMP (TC-AMP) to the N6 group of A37, together with TsaE and TsaB. TsaD likely plays a direct catalytic role in this reaction. This Solidesulfovibrio magneticus (strain ATCC 700980 / DSM 13731 / RS-1) (Desulfovibrio magneticus) protein is tRNA N6-adenosine threonylcarbamoyltransferase.